A 286-amino-acid polypeptide reads, in one-letter code: Translocon-associated protein subunit alpha (286 aa).

A signal peptide spans 1–23 (MRVLPRLLLLLLLAFPAAVLLRG). Residues 24 to 207 (GPGGSLVAAQ…EREDGLDGET (184 aa)) are Lumenal-facing. Over residues 37–75 (EDEETVEDSIIEDEDDEAEVEEDEPTDLAEDKEEEDVSG) the composition is skewed to acidic residues. Residues 37–83 (EDEETVEDSIIEDEDDEAEVEEDEPTDLAEDKEEEDVSGEPEASPSA) form a disordered region. Asn-136 and Asn-191 each carry an N-linked (GlcNAc...) asparagine glycan. A helical membrane pass occupies residues 208 to 228 (IFMYMFLAGLGLLVVVGLHQL). Residues 229-286 (LESRKRKRPIQKVEMGTSSQNDVDMSWIPQETLNQINKASPRRLPRKRAQKRSVGSDE) lie on the Cytoplasmic side of the membrane. Ser-247 bears the Phosphoserine mark. Thr-260 is modified (phosphothreonine). The disordered stretch occupies residues 261-286 (LNQINKASPRRLPRKRAQKRSVGSDE). At Ser-268 the chain carries Phosphoserine. Residues 268-279 (SPRRLPRKRAQK) show a composition bias toward basic residues.

Belongs to the TRAP-alpha family. Heterotetramer of TRAP-alpha, TRAP-beta, TRAP-delta and TRAP-gamma. Interacts with palmitoylated calnexin (CALX), the interaction is required for efficient folding of glycosylated proteins. Post-translationally, phosphorylated in its cytoplasmic tail.

It is found in the endoplasmic reticulum membrane. In terms of biological role, TRAP proteins are part of a complex whose function is to bind calcium to the ER membrane and thereby regulate the retention of ER resident proteins. May be involved in the recycling of the translocation apparatus after completion of the translocation process or may function as a membrane-bound chaperone facilitating folding of translocated proteins. This chain is Translocon-associated protein subunit alpha (SSR1), found in Canis lupus familiaris (Dog).